Consider the following 269-residue polypeptide: Eukaryotic translation initiation factor 3 subunit G-1 (269 aa).

The RRM domain maps to Ala188–Pro266.

The protein belongs to the eIF-3 subunit G family. Component of the eukaryotic translation initiation factor 3 (eIF-3) complex. The eIF-3 complex interacts with pix.

It localises to the cytoplasm. In terms of biological role, RNA-binding component of the eukaryotic translation initiation factor 3 (eIF-3) complex, which is involved in protein synthesis of a specialized repertoire of mRNAs and, together with other initiation factors, stimulates binding of mRNA and methionyl-tRNAi to the 40S ribosome. The eIF-3 complex specifically targets and initiates translation of a subset of mRNAs involved in cell proliferation. This subunit can bind 18S rRNA. This is Eukaryotic translation initiation factor 3 subunit G-1 from Drosophila willistoni (Fruit fly).